The primary structure comprises 369 residues: MKSRAAVAFGPGLPLEIVEIDVAPPKKGEVLVKISHTGVCHTDAYTLSGDDPEGLFPVVLGHEGAGVVVEVGEGVTSVKPGDHVIPLYTAECGECDFCTSGKTNLCVAVRETQGKGVMPDATSRFFVNGQPLYHYMGCSTFSEYTVVAEVSLAKINPQANAEQVCLLGCGVTTGIGAVHNTAKVQEGDSVAVFGLGGIGLAVVQGARQAKAGRIFAIDTNPSKFELAKQFGATDCINPNDYDKPVQQVLVEMTKWGVDHTFECIGNVNVMRSALESAHRGWGQSVIIGVAGAGKEISTRPFQLVTGRVWKGTAFGGVKGRTQLPGMVEDAMSGKIELAPFVTHTMELDKINEAFDLMHDGKSIRTVIHY.

7 residues coordinate Zn(2+): C40, H62, C92, C95, C98, C106, and C169.

The protein belongs to the zinc-containing alcohol dehydrogenase family. Class-III subfamily. In terms of assembly, homodimer. It depends on Zn(2+) as a cofactor.

It localises to the cytoplasm. The enzyme catalyses S-(hydroxymethyl)glutathione + NADP(+) = S-formylglutathione + NADPH + H(+). The catalysed reaction is S-(hydroxymethyl)glutathione + NAD(+) = S-formylglutathione + NADH + H(+). It carries out the reaction a primary alcohol + NAD(+) = an aldehyde + NADH + H(+). It catalyses the reaction a secondary alcohol + NAD(+) = a ketone + NADH + H(+). The enzyme catalyses S-nitrosoglutathione + NADH + H(+) = S-(hydroxysulfenamide)glutathione + NAD(+). Its function is as follows. Has high formaldehyde dehydrogenase activity in the presence of glutathione and catalyzes the oxidation of normal alcohols in a reaction that is not GSH-dependent. In addition, hemithiolacetals other than those formed from GSH, including omega-thiol fatty acids, also are substrates. Also acts as a S-nitroso-glutathione reductase by catalyzing the NADH-dependent reduction of S-nitrosoglutathione. This Photobacterium damsela subsp. piscicida (Pasteurella piscicida) protein is S-(hydroxymethyl)glutathione dehydrogenase (frmA).